Reading from the N-terminus, the 154-residue chain is Protein-export protein SecB (154 aa).

Belongs to the SecB family. In terms of assembly, homotetramer, a dimer of dimers. One homotetramer interacts with 1 SecA dimer.

The protein resides in the cytoplasm. Functionally, one of the proteins required for the normal export of preproteins out of the cell cytoplasm. It is a molecular chaperone that binds to a subset of precursor proteins, maintaining them in a translocation-competent state. It also specifically binds to its receptor SecA. The chain is Protein-export protein SecB from Vibrio parahaemolyticus serotype O3:K6 (strain RIMD 2210633).